Consider the following 515-residue polypeptide: Maturase K (515 aa).

Belongs to the intron maturase 2 family. MatK subfamily.

Its subcellular location is the plastid. It localises to the chloroplast. Usually encoded in the trnK tRNA gene intron. Probably assists in splicing its own and other chloroplast group II introns. This is Maturase K from Pinus clausa (Sand pine).